The sequence spans 103 residues: Small ribosomal subunit protein uS10 (103 aa).

Positions 35–59 are disordered; sequence LSGPVPLPTKTLEVPSRKSPDGEGT.

This sequence belongs to the universal ribosomal protein uS10 family. In terms of assembly, part of the 30S ribosomal subunit.

In terms of biological role, involved in the binding of tRNA to the ribosomes. This chain is Small ribosomal subunit protein uS10 (rps10), found in Haloarcula marismortui (strain ATCC 43049 / DSM 3752 / JCM 8966 / VKM B-1809) (Halobacterium marismortui).